We begin with the raw amino-acid sequence, 65 residues long: MPKIKTVRGAAKRFKKTAGGGFKRKHANLRHILTKKSTKRKRHLRPKGMVSKGDLGLVIACLPYA.

It belongs to the bacterial ribosomal protein bL35 family.

The protein is Large ribosomal subunit protein bL35 of Pectobacterium atrosepticum (strain SCRI 1043 / ATCC BAA-672) (Erwinia carotovora subsp. atroseptica).